Reading from the N-terminus, the 353-residue chain is D-alanine--D-alanine ligase A (353 aa).

The 206-residue stretch at 141–346 (KRLVNEAGLS…YPEIINRLVA (206 aa)) folds into the ATP-grasp domain. Residue 169–224 (EQALGLPIFIKPARQGSSVGVHKVVTEADYQAAMSDGFTYDDKLLAEEFIQAREVE) participates in ATP binding. Mg(2+) contacts are provided by Asp300, Glu313, and Asn315.

Belongs to the D-alanine--D-alanine ligase family. Requires Mg(2+) as cofactor. It depends on Mn(2+) as a cofactor.

It is found in the cytoplasm. It carries out the reaction 2 D-alanine + ATP = D-alanyl-D-alanine + ADP + phosphate + H(+). Its pathway is cell wall biogenesis; peptidoglycan biosynthesis. Its function is as follows. Cell wall formation. In Brucella suis biovar 1 (strain 1330), this protein is D-alanine--D-alanine ligase A.